The sequence spans 303 residues: Oxygen-dependent coproporphyrinogen-III oxidase (303 aa).

S93 contributes to the substrate binding site. A divalent metal cation-binding residues include H97 and H107. The active-site Proton donor is the H107. 109 to 111 serves as a coordination point for substrate; sequence NVR. Residues H149 and H179 each coordinate a divalent metal cation. Residues 244–279 are important for dimerization; it reads YVEFNLVFDRGTLFGLQSGGRTESILLSMPPLAQWR. Residue 262 to 264 participates in substrate binding; sequence GGR.

It belongs to the aerobic coproporphyrinogen-III oxidase family. Homodimer. The cofactor is a divalent metal cation.

The protein localises to the cytoplasm. The enzyme catalyses coproporphyrinogen III + O2 + 2 H(+) = protoporphyrinogen IX + 2 CO2 + 2 H2O. It functions in the pathway porphyrin-containing compound metabolism; protoporphyrin-IX biosynthesis; protoporphyrinogen-IX from coproporphyrinogen-III (O2 route): step 1/1. Its function is as follows. Involved in the heme biosynthesis. Catalyzes the aerobic oxidative decarboxylation of propionate groups of rings A and B of coproporphyrinogen-III to yield the vinyl groups in protoporphyrinogen-IX. In Bordetella parapertussis (strain 12822 / ATCC BAA-587 / NCTC 13253), this protein is Oxygen-dependent coproporphyrinogen-III oxidase.